The chain runs to 432 residues: Glutamate-1-semialdehyde 2,1-aminomutase 2 (432 aa).

K268 is subject to N6-(pyridoxal phosphate)lysine.

This sequence belongs to the class-III pyridoxal-phosphate-dependent aminotransferase family. HemL subfamily. In terms of assembly, homodimer. Pyridoxal 5'-phosphate serves as cofactor.

It localises to the cytoplasm. The enzyme catalyses (S)-4-amino-5-oxopentanoate = 5-aminolevulinate. It participates in porphyrin-containing compound metabolism; protoporphyrin-IX biosynthesis; 5-aminolevulinate from L-glutamyl-tRNA(Glu): step 2/2. The polypeptide is Glutamate-1-semialdehyde 2,1-aminomutase 2 (Listeria welshimeri serovar 6b (strain ATCC 35897 / DSM 20650 / CCUG 15529 / CIP 8149 / NCTC 11857 / SLCC 5334 / V8)).